We begin with the raw amino-acid sequence, 113 residues long: Endoribonuclease SymE (113 aa).

In terms of domain architecture, SpoVT-AbrB spans 29–74 (SRYPDYSRIPAITLKGQWLEAAGFATGTAIDVKVMEGCIVLTAQPP).

The protein belongs to the SymE family.

The protein localises to the cytoplasm. In terms of biological role, involved in the degradation and recycling of damaged RNA. It is itself a target for degradation by the ATP-dependent protease Lon. The polypeptide is Endoribonuclease SymE (Escherichia coli O1:K1 / APEC).